A 297-amino-acid polypeptide reads, in one-letter code: Protoheme IX farnesyltransferase 1 (297 aa).

The next 9 helical transmembrane spans lie at 23–43 (VVVLMLITSLAGMFLATRAGV), 45–65 (WSVLLFGNLGIGLCAGGAAVV), 93–113 (LPALLFALALALLGMVLLLVF), 117–137 (LTAWLTLASLLGYAVLYTGFL), 145–165 (IVIGGLAGAAPPLLGWVAVSG), 171–191 (PLLLVLIIFAWTPPHFWALAI), 216–236 (LHILLYTLILLAVSLLPYAIH), 241–261 (LYLVCALALGLRFLQWAWVLY), and 277–297 (IGYLFALFIALLLDHYLLLNL).

It belongs to the UbiA prenyltransferase family. Protoheme IX farnesyltransferase subfamily.

It localises to the cell inner membrane. It carries out the reaction heme b + (2E,6E)-farnesyl diphosphate + H2O = Fe(II)-heme o + diphosphate. The protein operates within porphyrin-containing compound metabolism; heme O biosynthesis; heme O from protoheme: step 1/1. Functionally, converts heme B (protoheme IX) to heme O by substitution of the vinyl group on carbon 2 of heme B porphyrin ring with a hydroxyethyl farnesyl side group. The chain is Protoheme IX farnesyltransferase 1 from Pseudomonas putida (strain ATCC 47054 / DSM 6125 / CFBP 8728 / NCIMB 11950 / KT2440).